The primary structure comprises 302 residues: Probable 2-(5''-triphosphoribosyl)-3'-dephosphocoenzyme-A synthase 1 (302 aa).

This sequence belongs to the CitG/MdcB family.

The enzyme catalyses 3'-dephospho-CoA + ATP = 2'-(5''-triphospho-alpha-D-ribosyl)-3'-dephospho-CoA + adenine. The polypeptide is Probable 2-(5''-triphosphoribosyl)-3'-dephosphocoenzyme-A synthase 1 (Salmonella typhimurium (strain LT2 / SGSC1412 / ATCC 700720)).